The primary structure comprises 317 residues: Aspartate carbamoyltransferase catalytic subunit (317 aa).

Residues Arg65 and Thr66 each coordinate carbamoyl phosphate. Lys93 contributes to the L-aspartate binding site. Carbamoyl phosphate is bound by residues Arg115, His145, and Gln148. The L-aspartate site is built by Arg178 and Arg233. 2 residues coordinate carbamoyl phosphate: Gly274 and Pro275.

The protein belongs to the aspartate/ornithine carbamoyltransferase superfamily. ATCase family. Heterododecamer (2C3:3R2) of six catalytic PyrB chains organized as two trimers (C3), and six regulatory PyrI chains organized as three dimers (R2).

It catalyses the reaction carbamoyl phosphate + L-aspartate = N-carbamoyl-L-aspartate + phosphate + H(+). The protein operates within pyrimidine metabolism; UMP biosynthesis via de novo pathway; (S)-dihydroorotate from bicarbonate: step 2/3. Its function is as follows. Catalyzes the condensation of carbamoyl phosphate and aspartate to form carbamoyl aspartate and inorganic phosphate, the committed step in the de novo pyrimidine nucleotide biosynthesis pathway. The polypeptide is Aspartate carbamoyltransferase catalytic subunit (Methylobacillus flagellatus (strain ATCC 51484 / DSM 6875 / VKM B-1610 / KT)).